A 224-amino-acid chain; its full sequence is Ion-translocating oxidoreductase complex subunit E (224 aa).

Helical transmembrane passes span 51–71 (LGLG…VSLF), 81–101 (IPIY…LMNA), 105–125 (SLYQ…IVIG), 140–160 (MFDG…LGAI), and 194–214 (HFLL…ILAI).

It belongs to the NqrDE/RnfAE family. As to quaternary structure, the complex is composed of six subunits: RnfA, RnfB, RnfC, RnfD, RnfE and RnfG.

Its subcellular location is the cell inner membrane. In terms of biological role, part of a membrane-bound complex that couples electron transfer with translocation of ions across the membrane. In Pasteurella multocida (strain Pm70), this protein is Ion-translocating oxidoreductase complex subunit E.